The chain runs to 824 residues: Phenylalanine--tRNA ligase beta subunit (824 aa).

One can recognise a tRNA-binding domain in the interval 39 to 153; sequence SEQAKNVVIG…NIPPIGSNAV (115 aa). The B5 domain maps to 414–507; it reads KKSISVNLRM…RLIGYDNFDS (94 aa). Mg(2+) is bound by residues Asp485, Asp491, Glu494, and Glu495. Positions 730–823 constitute an FDX-ACB domain; it reads PTVPYMERDI…LKEKIKAELR (94 aa).

Belongs to the phenylalanyl-tRNA synthetase beta subunit family. Type 1 subfamily. Tetramer of two alpha and two beta subunits. Mg(2+) serves as cofactor.

It is found in the cytoplasm. The enzyme catalyses tRNA(Phe) + L-phenylalanine + ATP = L-phenylalanyl-tRNA(Phe) + AMP + diphosphate + H(+). The sequence is that of Phenylalanine--tRNA ligase beta subunit from Prochlorococcus marinus (strain NATL2A).